The primary structure comprises 384 residues: uncharacterized protein (384 aa).

This is an uncharacterized protein from Methanocaldococcus jannaschii (strain ATCC 43067 / DSM 2661 / JAL-1 / JCM 10045 / NBRC 100440) (Methanococcus jannaschii).